The following is a 601-amino-acid chain: Terpenoid synthase 17 (601 aa).

Asn354, Asp358, Asn497, Thr501, and Glu505 together coordinate Mg(2+). The DDXXD motif; degenerate signature appears at 354-358; sequence NDTCD.

Belongs to the terpene synthase family. Tpsa subfamily. The cofactor is Mg(2+). Mn(2+) serves as cofactor. Expressed exclusively in flowers.

The protein localises to the cytoplasm. The protein operates within secondary metabolite biosynthesis; terpenoid biosynthesis. The polypeptide is Terpenoid synthase 17 (TPS17) (Arabidopsis thaliana (Mouse-ear cress)).